The sequence spans 165 residues: Lipoprotein signal peptidase (165 aa).

A run of 3 helical transmembrane segments spans residues 12–32 (WLWV…LILQ), 70–90 (WFFA…MYRS), and 102–122 (ALII…GFVV). Residues Asp123 and Asp141 contribute to the active site. The helical transmembrane segment at 137-157 (FNLADSAICIGAALIVLEGFL) threads the bilayer.

This sequence belongs to the peptidase A8 family.

The protein resides in the cell inner membrane. It catalyses the reaction Release of signal peptides from bacterial membrane prolipoproteins. Hydrolyzes -Xaa-Yaa-Zaa-|-(S,diacylglyceryl)Cys-, in which Xaa is hydrophobic (preferably Leu), and Yaa (Ala or Ser) and Zaa (Gly or Ala) have small, neutral side chains.. It functions in the pathway protein modification; lipoprotein biosynthesis (signal peptide cleavage). This protein specifically catalyzes the removal of signal peptides from prolipoproteins. The sequence is that of Lipoprotein signal peptidase from Klebsiella aerogenes (strain ATCC 13048 / DSM 30053 / CCUG 1429 / JCM 1235 / KCTC 2190 / NBRC 13534 / NCIMB 10102 / NCTC 10006 / CDC 819-56) (Enterobacter aerogenes).